The chain runs to 221 residues: Max dimerization protein 1 (221 aa).

The short motif at 21–49 is the Nuclear localization signal element; sequence RREREAEHGYASMLPYNNKDRDALKRRNK. Disordered stretches follow at residues 30–68 and 173–204; these read YASM…EKNR and TGDL…YSST. Residues 56–108 form the bHLH domain; it reads SSRSTHNEMEKNRRAHLRLCLEKLKGLVPLGPESSRHTTLSLLTKAKLHIKKL. The span at 175–184 shows a compositional bias: low complexity; sequence DLDWSSSSVS. The segment covering 191–204 has biased composition (polar residues); that stretch reads SMQSLGSDEGYSST.

Heterodimer with MAX; the interaction is required for DNA-binding. DNA binding requires dimerization with another bHLH protein; does not form homodimers, and does not bind to DNA in the absence of MAX in vitro. Interacts with RNF17. Post-translationally, ubiquitinated by BIRC2/c-IAP1, leading to its subsequent degradation by the proteasome.

It is found in the nucleus. Component of a transcriptional repressor complex together with MAX. In complex with MAX binds to the core DNA sequence 5'-CAC[GA]TG-3'. Antagonizes MYC transcriptional activity by competing with MYC for MAX binding. Binds to the TERT promoter and represses telomerase expression, possibly by interfering with MYC binding. The protein is Max dimerization protein 1 (MXD1) of Homo sapiens (Human).